The following is a 460-amino-acid chain: Ammonium transporter 1 member 3 (460 aa).

A run of 10 helical transmembrane segments spans residues 15–37 (AIYL…MLCA), 50–72 (LTNV…AFAF), 98–117 (FFLY…SGSI), 124–146 (TAYL…HWLW), 166–188 (IDFA…GSIV), 209–227 (NATL…WFGF), 255–277 (AVTT…RLLV), 305–327 (PWAA…ILAL), 337–356 (AAQL…GLFA), and 377–399 (GLIL…SIVV).

This sequence belongs to the ammonia transporter channel (TC 1.A.11.2) family. As to expression, leaves.

It localises to the membrane. Ammonium transporter that may be involved in ammonium transport throughout the plant. The protein is Ammonium transporter 1 member 3 (AMT1-3) of Solanum lycopersicum (Tomato).